Consider the following 75-residue polypeptide: U6-lycotoxin-Ls1g (75 aa).

The first 21 residues, 1-21 (MKLLLFTALVLVVISLIEVEA), serve as a signal peptide directing secretion. Residues 22–25 (ENER) constitute a propeptide that is removed on maturation.

This sequence belongs to the neurotoxin 19 (CSTX) family. 06 (U6-Lctx) subfamily. Post-translationally, contains 4 disulfide bonds. Expressed by the venom gland.

The protein resides in the secreted. The protein is U6-lycotoxin-Ls1g of Lycosa singoriensis (Wolf spider).